Reading from the N-terminus, the 567-residue chain is MSFKFNEESFLDNSFNETLREKLTKMLNSRKSMDIKIDDHLSYANNRGSTSCSNNFDNSSSIKARDSKLDILKSDVKVCEVNFPTIPNLEILDLDVSGQPRALAKGICKISCRDALLQIQTEIEANSLLLYTNISPDFTTPLMIANDTFTIPITMTFSQIQLEAITNVFVKNSGVGISFNDVSLDFQFDCSIKLLQPHIAKRLRKSMQLVFKDVLPSALFNMSRSWFTHDGSSSQTTTDHSQEEGSRLIRLHRLTVEDLDLQDLSPVNMLKLSTLTSSRQTLSLHSTMPKYFSTIPGCLDRQNFRNFTSRMPCLSNYGGGSDDGDKHVPHIHNLQNKNLLPEEALEENDIDLKAILSIQTKIYERGISTNNDVIRPRRRKIRIKRAKKSIVNKATETSSNLNADSEITPVSSSHNATSSVNTITSLTTSSLGSTAGSSNSKNTNRSSSFTSSIMPITPLAQSSMNKKDGNLITLRQDSKVLDSMKYFTKIQDLHNIHASFNSSRETQDSNNRFRIASEMLPTKREISPIPTLNSFIEPNRRFSFVGLNHKTSHDNSWSVDEQPPPYY.

The SMP-LTD domain occupies 1–224 (MSFKFNEESF…LPSALFNMSR (224 aa)). The span at 392–416 (NKATETSSNLNADSEITPVSSSHNA) shows a compositional bias: polar residues. The interval 392 to 453 (NKATETSSNL…NRSSSFTSSI (62 aa)) is disordered. Low complexity predominate over residues 417-452 (TSSVNTITSLTTSSLGSTAGSSNSKNTNRSSSFTSS).

The protein belongs to the MDM34 family. As to quaternary structure, component of the ER-mitochondria encounter structure (ERMES) or MDM complex, composed of MMM1, MDM10, MDM12 and MDM34.

It localises to the mitochondrion outer membrane. Functionally, component of the ERMES/MDM complex, which serves as a molecular tether to connect the endoplasmic reticulum (ER) and mitochondria. Components of this complex are involved in the control of mitochondrial shape and protein biogenesis, and function in nonvesicular lipid trafficking between the ER and mitochondria. MDM34 is required for the interaction of the ER-resident membrane protein MMM1 and the outer mitochondrial membrane-resident beta-barrel protein MDM10. This is Mitochondrial distribution and morphology protein 34 from Vanderwaltozyma polyspora (strain ATCC 22028 / DSM 70294 / BCRC 21397 / CBS 2163 / NBRC 10782 / NRRL Y-8283 / UCD 57-17) (Kluyveromyces polysporus).